A 298-amino-acid chain; its full sequence is Diphthine methyl ester synthase (298 aa).

S-adenosyl-L-methionine-binding positions include Leu-9, Asp-85, Gly-88, 113-114, Leu-164, Leu-222, and His-247; that span reads SV.

It belongs to the diphthine synthase family.

The protein resides in the cytoplasm. It carries out the reaction 2-[(3S)-amino-3-carboxypropyl]-L-histidyl-[translation elongation factor 2] + 4 S-adenosyl-L-methionine = diphthine methyl ester-[translation elongation factor 2] + 4 S-adenosyl-L-homocysteine + 3 H(+). The protein operates within protein modification; peptidyl-diphthamide biosynthesis. S-adenosyl-L-methionine-dependent methyltransferase that catalyzes four methylations of the modified target histidine residue in translation elongation factor 2 (EF-2), to form an intermediate called diphthine methyl ester. The four successive methylation reactions represent the second step of diphthamide biosynthesis. This is Diphthine methyl ester synthase (DPH5) from Candida glabrata (strain ATCC 2001 / BCRC 20586 / JCM 3761 / NBRC 0622 / NRRL Y-65 / CBS 138) (Yeast).